The primary structure comprises 173 residues: Crossover junction endodeoxyribonuclease RuvC (173 aa).

Residues Asp8, Glu69, and Asp141 contribute to the active site. Asp8, Glu69, and Asp141 together coordinate Mg(2+).

The protein belongs to the RuvC family. In terms of assembly, homodimer which binds Holliday junction (HJ) DNA. The HJ becomes 2-fold symmetrical on binding to RuvC with unstacked arms; it has a different conformation from HJ DNA in complex with RuvA. In the full resolvosome a probable DNA-RuvA(4)-RuvB(12)-RuvC(2) complex forms which resolves the HJ. Mg(2+) serves as cofactor.

Its subcellular location is the cytoplasm. The catalysed reaction is Endonucleolytic cleavage at a junction such as a reciprocal single-stranded crossover between two homologous DNA duplexes (Holliday junction).. Its function is as follows. The RuvA-RuvB-RuvC complex processes Holliday junction (HJ) DNA during genetic recombination and DNA repair. Endonuclease that resolves HJ intermediates. Cleaves cruciform DNA by making single-stranded nicks across the HJ at symmetrical positions within the homologous arms, yielding a 5'-phosphate and a 3'-hydroxyl group; requires a central core of homology in the junction. The consensus cleavage sequence is 5'-(A/T)TT(C/G)-3'. Cleavage occurs on the 3'-side of the TT dinucleotide at the point of strand exchange. HJ branch migration catalyzed by RuvA-RuvB allows RuvC to scan DNA until it finds its consensus sequence, where it cleaves and resolves the cruciform DNA. The polypeptide is Crossover junction endodeoxyribonuclease RuvC (Xylella fastidiosa (strain 9a5c)).